Reading from the N-terminus, the 495-residue chain is ATP synthase subunit beta, chloroplastic (495 aa).

ATP is bound at residue 172–179 (GGAGVGKT).

This sequence belongs to the ATPase alpha/beta chains family. F-type ATPases have 2 components, CF(1) - the catalytic core - and CF(0) - the membrane proton channel. CF(1) has five subunits: alpha(3), beta(3), gamma(1), delta(1), epsilon(1). CF(0) has four main subunits: a(1), b(1), b'(1) and c(9-12).

It is found in the plastid. Its subcellular location is the chloroplast thylakoid membrane. It carries out the reaction ATP + H2O + 4 H(+)(in) = ADP + phosphate + 5 H(+)(out). Produces ATP from ADP in the presence of a proton gradient across the membrane. The catalytic sites are hosted primarily by the beta subunits. This is ATP synthase subunit beta, chloroplastic from Bowiea volubilis (Climbing onion).